The following is a 527-amino-acid chain: Phosphoenolpyruvate carboxykinase (ATP) (527 aa).

The substrate site is built by Arg-56, Tyr-192, and Lys-198. Residues Lys-198, His-217, and 233–241 each bind ATP; that span reads GLSGTGKTT. Mn(2+)-binding residues include Lys-198 and His-217. Residue Asp-254 coordinates Mn(2+). The ATP site is built by Glu-282, Arg-319, and Thr-444. Residue Arg-319 coordinates substrate.

This sequence belongs to the phosphoenolpyruvate carboxykinase (ATP) family. Mn(2+) serves as cofactor.

It is found in the cytoplasm. The enzyme catalyses oxaloacetate + ATP = phosphoenolpyruvate + ADP + CO2. It functions in the pathway carbohydrate biosynthesis; gluconeogenesis. Involved in the gluconeogenesis. Catalyzes the conversion of oxaloacetate (OAA) to phosphoenolpyruvate (PEP) through direct phosphoryl transfer between the nucleoside triphosphate and OAA. The chain is Phosphoenolpyruvate carboxykinase (ATP) from Bacillus velezensis (strain DSM 23117 / BGSC 10A6 / LMG 26770 / FZB42) (Bacillus amyloliquefaciens subsp. plantarum).